Consider the following 718-residue polypeptide: Exostosin-2 (718 aa).

Over 1-25 (MCASVKSNIRGPALIPRMKTKHRIY) the chain is Cytoplasmic. The chain crosses the membrane as a helical; Signal-anchor for type II membrane protein span at residues 26–46 (YVTLFSIVLLGLIATGMFQFW). The Lumenal portion of the chain corresponds to 47 to 718 (PHSIESSSDG…LKSFPNIGSL (672 aa)). Disulfide bonds link Cys85/Cys90, Cys96/Cys151, Cys286/Cys300, and Cys318/Cys339. N-linked (GlcNAc...) asparagine glycosylation is present at Asn288. UDP-binding residues include Leu461, Arg465, Asn490, and Asn517. UDP-N-acetyl-alpha-D-glucosamine-binding residues include Arg465, Asn490, Asn517, Arg522, Asp538, Asp539, and Asp540. Residues Asp538 and Asp539 each coordinate UDP. Asp540 lines the Mn(2+) pocket. Positions 582 and 584 each coordinate a protein. An intrachain disulfide couples Cys626 to Cys676. Residues Glu627 and Asp628 each coordinate UDP-N-acetyl-alpha-D-glucosamine. A glycan (N-linked (GlcNAc...) asparagine) is linked at Asn637. A protein is bound by residues Lys651 and Lys653. Arg673 is a UDP-N-acetyl-alpha-D-glucosamine binding site.

Belongs to the glycosyltransferase 47 family. Part of the heparan sulfate polymerase, a dimeric complex composed of EXT1 and EXT2. Could also form homooligomeric complexes. Interacts with NDST1. Interacts with GALNT5. Requires Mn(2+) as cofactor. Post-translationally, N-glycosylated at Asn-637. In terms of processing, a soluble form is generated by proteolytic processing. In terms of tissue distribution, expressed in heart, brain, spleen, lung, liver, skeletal muscle and testis. Heart shows a high expression.

The protein resides in the golgi apparatus membrane. It is found in the golgi apparatus. It localises to the cis-Golgi network membrane. The protein localises to the endoplasmic reticulum membrane. Its subcellular location is the secreted. The catalysed reaction is 3-O-{[(1-&gt;4)-beta-D-GlcA-(1-&gt;4)-alpha-D-GlcNAc](n)-(1-&gt;4)-beta-D-GlcA-(1-&gt;3)-beta-D-Gal-(1-&gt;3)-beta-D-Gal-(1-&gt;4)-beta-D-Xyl}-L-seryl-[protein] + UDP-N-acetyl-alpha-D-glucosamine = 3-O-{alpha-D-GlcNAc-[(1-&gt;4)-beta-D-GlcA-(1-&gt;4)-alpha-D-GlcNAc](n)-(1-&gt;4)-beta-D-GlcA-(1-&gt;3)-beta-D-Gal-(1-&gt;3)-beta-D-Gal-(1-&gt;4)-beta-D-Xyl}-L-seryl-[protein] + UDP + H(+). The protein operates within protein modification; protein glycosylation. Functionally, glycosyltransferase forming with EXT1 the heterodimeric heparan sulfate polymerase which catalyzes the elongation of the heparan sulfate glycan backbone. Glycan backbone extension consists in the alternating transfer of (1-&gt;4)-beta-D-GlcA and (1-&gt;4)-alpha-D-GlcNAc residues from their respective UDP-sugar donors. Both EXT1 and EXT2 are required for the full activity of the polymerase since EXT1 bears the N-acetylglucosaminyl-proteoglycan 4-beta-glucuronosyltransferase activity within the complex while EXT2 carries the glucuronosyl-N-acetylglucosaminyl-proteoglycan 4-alpha-N-acetylglucosaminyltransferase activity. Heparan sulfate proteoglycans are ubiquitous components of the extracellular matrix and play an important role in tissue homeostasis and signaling. This Mus musculus (Mouse) protein is Exostosin-2.